A 329-amino-acid polypeptide reads, in one-letter code: Cytosolic sulfotransferase 6 (329 aa).

Residue 74–79 (KCGTTW) participates in 3'-phosphoadenylyl sulfate binding. H140 functions as the Proton acceptor in the catalytic mechanism. Residues R162, S170, and 295 to 297 (RKG) each bind 3'-phosphoadenylyl sulfate.

The protein belongs to the sulfotransferase 1 family.

It is found in the cytoplasm. Its function is as follows. Sulfotransferase that utilizes 3'-phospho-5'-adenylyl sulfate (PAPS) as sulfonate donor. In Arabidopsis thaliana (Mouse-ear cress), this protein is Cytosolic sulfotransferase 6 (SOT6).